A 146-amino-acid polypeptide reads, in one-letter code: Hemoglobin subunit beta (146 aa).

At valine 1 the chain carries N-acetylvaline. Positions 2–146 (HLTGEEKSAV…VANALAHKYH (145 aa)) constitute a Globin domain. The residue at position 12 (threonine 12) is a Phosphothreonine. Serine 44 carries the post-translational modification Phosphoserine. Position 59 is an N6-acetyllysine (lysine 59). Histidine 63 is a binding site for heme b. The residue at position 82 (lysine 82) is an N6-acetyllysine. Histidine 92 lines the heme b pocket. Cysteine 93 is modified (S-nitrosocysteine). Lysine 144 is subject to N6-acetyllysine.

It belongs to the globin family. Heterotetramer of two alpha chains and two beta chains. Red blood cells.

Involved in oxygen transport from the lung to the various peripheral tissues. This is Hemoglobin subunit beta (HBB) from Saguinus mystax (Moustached tamarin).